A 228-amino-acid polypeptide reads, in one-letter code: Cytidylate kinase (228 aa).

17 to 25 (GPTASGKGT) contributes to the ATP binding site.

It belongs to the cytidylate kinase family. Type 1 subfamily.

It localises to the cytoplasm. The catalysed reaction is CMP + ATP = CDP + ADP. It carries out the reaction dCMP + ATP = dCDP + ADP. The polypeptide is Cytidylate kinase (Burkholderia cenocepacia (strain HI2424)).